Reading from the N-terminus, the 231-residue chain is Regulatory protein VanRc (231 aa).

A Response regulatory domain is found at 4-117 (KIVVVDDEKE…EVVARVKTQL (114 aa)). Aspartate 53 is subject to 4-aspartylphosphate. Positions 132-231 (VEEYEKDGLI…VWGVGYIIEK (100 aa)) form a DNA-binding region, ompR/PhoB-type.

Post-translationally, phosphorylated by VanSc.

The protein localises to the cytoplasm. Its function is as follows. Member of the two-component regulatory system VanSc/VanRc. Binds to the promoter regions of target genes. Activates the transcription of vanC1 and vanXYC in response to vancomycin which results in vancomycin resistance. In Enterococcus gallinarum, this protein is Regulatory protein VanRc.